Reading from the N-terminus, the 264-residue chain is MKVIKTLSIINFFIFVTFNIKNESKYSNTFINNAYNMSIRRSMANEGSNTNSVGANAPNADTIASGSQRSTNSASTSTTNNGESQTTTPTAADTIASGSQRSTNSASTSTTNNGESQTTTPTAADTPTTTESNSPSPPITTTESSKFWQCTNKTDGKGEESEKQNELNESTEEGPKAPQEPQTAENENPAAPENKGTGQHGHMHGSRNNHPQNTSDSQKECTDGNKENCGAATSLLNNSSNIASINKFVVLISATLVLSFAIFI.

The signal sequence occupies residues 1–20; it reads MKVIKTLSIINFFIFVTFNI. N-linked (GlcNAc...) asparagine glycosylation is found at Asn-22 and Asn-36. The tract at residues 44 to 190 is polymorphic region; the sequence is ANEGSNTNSV…PQTAENENPA (147 aa). The segment at 46-225 is disordered; it reads EGSNTNSVGA…DSQKECTDGN (180 aa). 2 repeat units span residues 60–91 and 92–123. The segment at 60–123 is 2 X 32 AA perfects repeats; sequence ADTIASGSQR…GESQTTTPTA (64 aa). A compositionally biased stretch (low complexity) spans 70–81; that stretch reads STNSASTSTTNN. Residues 82 to 101 are compositionally biased toward polar residues; sequence GESQTTTPTAADTIASGSQR. Residues 102 to 145 are compositionally biased toward low complexity; it reads STNSASTSTTNNGESQTTTPTAADTPTTTESNSPSPPITTTESS. N-linked (GlcNAc...) asparagine glycosylation occurs at Asn-152. A compositionally biased stretch (basic and acidic residues) spans 154–166; it reads TDGKGEESEKQNE. N-linked (GlcNAc...) asparagine glycans are attached at residues Asn-168 and Asn-213. Cys-221 and Cys-229 are joined by a disulfide. Asn-237 and Asn-238 each carry an N-linked (GlcNAc...) asparagine glycan. Residue Asn-238 is the site of GPI-anchor amidated asparagine attachment. Positions 239–264 are cleaved as a propeptide — removed in mature form; it reads SSNIASINKFVVLISATLVLSFAIFI.

It is found in the cell membrane. Functionally, may play a role in the merozoite attachment to the erythrocyte. The sequence is that of Merozoite surface protein 2 from Plasmodium falciparum (isolate fid3 / India).